The sequence spans 121 residues: Succinate dehydrogenase assembly factor 3, mitochondrial (121 aa).

A mitochondrion-targeting transit peptide spans 1–35 (MRPSLVRLVRPRRPERKTSPILPPLKLYKALLRAH).

It belongs to the complex I LYR family. SDHAF3 subfamily. Interacts with the iron-sulfur protein subunit within the SDH catalytic dimer.

The protein localises to the mitochondrion matrix. In terms of biological role, plays an essential role in the assembly of succinate dehydrogenase (SDH), an enzyme complex (also referred to as respiratory complex II) that is a component of both the tricarboxylic acid (TCA) cycle and the mitochondrial electron transport chain, and which couples the oxidation of succinate to fumarate with the reduction of ubiquinone (coenzyme Q) to ubiquinol. Promotes maturation of the iron-sulfur protein subunit of the SDH catalytic dimer, protecting it from the deleterious effects of oxidants. May act together with SDHAF1. The chain is Succinate dehydrogenase assembly factor 3, mitochondrial from Debaryomyces hansenii (strain ATCC 36239 / CBS 767 / BCRC 21394 / JCM 1990 / NBRC 0083 / IGC 2968) (Yeast).